We begin with the raw amino-acid sequence, 78 residues long: D-alanyl carrier protein (78 aa).

Positions 1–78 (MAFRENVLEI…MIITQLEALK (78 aa)) constitute a Carrier domain. S36 is subject to O-(pantetheine 4'-phosphoryl)serine.

Belongs to the DltC family. 4'-phosphopantetheine is transferred from CoA to a specific serine of apo-DCP.

It localises to the cytoplasm. It participates in cell wall biogenesis; lipoteichoic acid biosynthesis. Carrier protein involved in the D-alanylation of lipoteichoic acid (LTA). The loading of thioester-linked D-alanine onto DltC is catalyzed by D-alanine--D-alanyl carrier protein ligase DltA. The DltC-carried D-alanyl group is further transferred to cell membrane phosphatidylglycerol (PG) by forming an ester bond, probably catalyzed by DltD. D-alanylation of LTA plays an important role in modulating the properties of the cell wall in Gram-positive bacteria, influencing the net charge of the cell wall. This Listeria monocytogenes serotype 4a (strain HCC23) protein is D-alanyl carrier protein.